A 341-amino-acid chain; its full sequence is Guanine nucleotide-binding protein subunit beta (341 aa).

WD repeat units lie at residues 54-93, 96-135, 142-180, 183-222, 225-264, 269-308, and 311-341; these read GHLA…KVHA, LRSS…GNVR, GHTG…QTTA, GHTG…CKQT, GHES…EIGM, NIIC…RAGV, and GHDN…RIWN.

The protein belongs to the WD repeat G protein beta family. As to quaternary structure, g proteins are composed of 3 units, alpha, beta and gamma. The G protein beta1-gamma2 dimer interacts with calmodulin. As to expression, abundantly expressed in gills, gonad and mantle and at lower levels in digestion gland. Not detected in muscle.

It localises to the cytoplasm. Functionally, guanine nucleotide-binding proteins (G proteins) are involved as a modulator or transducer in various transmembrane signaling systems. The beta and gamma chains are required for the GTPase activity, for replacement of GDP by GTP, and for G protein-effector interaction. The protein is Guanine nucleotide-binding protein subunit beta of Pinctada fucata (Akoya pearl oyster).